The primary structure comprises 509 residues: GMP synthase [glutamine-hydrolyzing] (509 aa).

Residues 4-194 (KVIVLDFGGQ…LYEICGLTPD (191 aa)) form the Glutamine amidotransferase type-1 domain. Cys81 (nucleophile) is an active-site residue. Catalysis depends on residues His168 and Glu170. A GMPS ATP-PPase domain is found at 195–384 (WTMESFAQKA…LGLPESIVWR (190 aa)). An ATP-binding site is contributed by 222–228 (SGGVDSS).

In terms of assembly, homodimer.

The enzyme catalyses XMP + L-glutamine + ATP + H2O = GMP + L-glutamate + AMP + diphosphate + 2 H(+). Its pathway is purine metabolism; GMP biosynthesis; GMP from XMP (L-Gln route): step 1/1. Functionally, catalyzes the synthesis of GMP from XMP. This is GMP synthase [glutamine-hydrolyzing] from Carboxydothermus hydrogenoformans (strain ATCC BAA-161 / DSM 6008 / Z-2901).